A 375-amino-acid polypeptide reads, in one-letter code: Queuine tRNA-ribosyltransferase (375 aa).

Asp90 (proton acceptor) is an active-site residue. Substrate-binding positions include Asp90–Phe94, Asp144, Gln193, and Gly220. The interval Gly251–Asp257 is RNA binding. Asp270 functions as the Nucleophile in the catalytic mechanism. Residues Thr275 to Arg279 form an RNA binding; important for wobble base 34 recognition region. The Zn(2+) site is built by Cys308, Cys310, Cys313, and His339.

It belongs to the queuine tRNA-ribosyltransferase family. Homodimer. Within each dimer, one monomer is responsible for RNA recognition and catalysis, while the other monomer binds to the replacement base PreQ1. Zn(2+) serves as cofactor.

It catalyses the reaction 7-aminomethyl-7-carbaguanine + guanosine(34) in tRNA = 7-aminomethyl-7-carbaguanosine(34) in tRNA + guanine. It functions in the pathway tRNA modification; tRNA-queuosine biosynthesis. In terms of biological role, catalyzes the base-exchange of a guanine (G) residue with the queuine precursor 7-aminomethyl-7-deazaguanine (PreQ1) at position 34 (anticodon wobble position) in tRNAs with GU(N) anticodons (tRNA-Asp, -Asn, -His and -Tyr). Catalysis occurs through a double-displacement mechanism. The nucleophile active site attacks the C1' of nucleotide 34 to detach the guanine base from the RNA, forming a covalent enzyme-RNA intermediate. The proton acceptor active site deprotonates the incoming PreQ1, allowing a nucleophilic attack on the C1' of the ribose to form the product. After dissociation, two additional enzymatic reactions on the tRNA convert PreQ1 to queuine (Q), resulting in the hypermodified nucleoside queuosine (7-(((4,5-cis-dihydroxy-2-cyclopenten-1-yl)amino)methyl)-7-deazaguanosine). The protein is Queuine tRNA-ribosyltransferase of Methylibium petroleiphilum (strain ATCC BAA-1232 / LMG 22953 / PM1).